We begin with the raw amino-acid sequence, 476 residues long: Protein THYLAKOID RHODANESE-LIKE, chloroplastic (476 aa).

Residues 1 to 21 constitute a chloroplast transit peptide; sequence MAATTTILSSAAPTPLTAPPR. Residues 1–29 are disordered; that stretch reads MAATTTILSSAAPTPLTAPPRARARAPAA. Over residues 11–21 the composition is skewed to low complexity; it reads AAPTPLTAPPR. The transit peptide at 22 to 58 directs the protein to the thylakoid; the sequence is ARARAPAARRRRLRARDILGAALGLANGGASAALAAP. A helical membrane pass occupies residues 100-120; that stretch reads LVAAAGVAAVALPLVLAQVLG. The region spanning 140–246 is the Rhodanese domain; sequence EEPGAQLVDI…WLSSSLPWTA (107 aa). Helical transmembrane passes span 264–284 and 287–307; these read LPVTLGLAAATGLGILAYTEI and VLQFLGSAAIVQLVASKLIYA. Positions 342 to 476 are disordered; that stretch reads LPSTGTKSQP…PPSSPSPSAP (135 aa). The span at 351–389 shows a compositional bias: low complexity; the sequence is PAITEAAPATAEAAPAAATATAAPPAAPVEETSTEAAPA. Over residues 403-412 the composition is skewed to pro residues; it reads LKPPSSPSPL. Residues 425 to 446 are compositionally biased toward low complexity; sequence ESAATESAPAVNSAPVAEAAPE. A compositionally biased stretch (pro residues) spans 447–476; it reads AAPPAAPRPLSPYPNYPDLKPPSSPSPSAP.

In terms of assembly, component of high molecular weight thylakoid LFNRs-containing protein complexes containing LIR1, LFNR1, LFNR2, TIC62 and TROL proteins.

Its subcellular location is the plastid. It localises to the chloroplast thylakoid membrane. Functionally, rhodanese domain-containing protein required for anchoring ferredoxin--NADP reductase to the thylakoid membranes and sustaining efficient linear electron flow (LEF). The sequence is that of Protein THYLAKOID RHODANESE-LIKE, chloroplastic from Oryza sativa subsp. indica (Rice).